Reading from the N-terminus, the 156-residue chain is Transcription factor E (156 aa).

The HTH TFE/IIEalpha-type domain occupies 1-72 (MYGEKAKKVL…LWILNIDQIE (72 aa)).

Belongs to the TFE family. As to quaternary structure, monomer. Interaction with RNA polymerase subunits RpoF and RpoE is necessary for Tfe stimulatory transcription activity. Able to interact with Tbp and RNA polymerase in the absence of DNA promoter. Interacts both with the preinitiation and elongation complexes.

In terms of biological role, transcription factor that plays a role in the activation of archaeal genes transcribed by RNA polymerase. Facilitates transcription initiation by enhancing TATA-box recognition by TATA-box-binding protein (Tbp), and transcription factor B (Tfb) and RNA polymerase recruitment. Not absolutely required for transcription in vitro, but particularly important in cases where Tbp or Tfb function is not optimal. It dynamically alters the nucleic acid-binding properties of RNA polymerases by stabilizing the initiation complex and destabilizing elongation complexes. Seems to translocate with the RNA polymerase following initiation and acts by binding to the non template strand of the transcription bubble in elongation complexes. The sequence is that of Transcription factor E from Staphylothermus marinus (strain ATCC 43588 / DSM 3639 / JCM 9404 / F1).